A 601-amino-acid polypeptide reads, in one-letter code: Membrane protein insertase YidC (601 aa).

The helical transmembrane segment at 10-30 threads the bilayer; it reads ISISLVILVLFQVIASYVLPP. The tract at residues 34 to 63 is disordered; the sequence is APPHPATQTAQTQPVSGQPAPGVPAPSAVP. Residues 39–53 show a composition bias toward low complexity; sequence ATQTAQTQPVSGQPA. Over residues 54–63 the composition is skewed to pro residues; the sequence is PGVPAPSAVP. 4 helical membrane-spanning segments follow: residues 382-404, 455-475, 510-530, and 549-569; these read FGNM…FPLV, LPML…FISI, ALSP…TMWG, and FMPV…VLYY.

The protein belongs to the OXA1/ALB3/YidC family. Type 1 subfamily. In terms of assembly, interacts with the Sec translocase complex via SecD. Specifically interacts with transmembrane segments of nascent integral membrane proteins during membrane integration.

It is found in the cell inner membrane. Required for the insertion and/or proper folding and/or complex formation of integral membrane proteins into the membrane. Involved in integration of membrane proteins that insert both dependently and independently of the Sec translocase complex, as well as at least some lipoproteins. Aids folding of multispanning membrane proteins. The sequence is that of Membrane protein insertase YidC from Acidiphilium cryptum (strain JF-5).